Reading from the N-terminus, the 134-residue chain is Small ribosomal subunit protein uS9 (134 aa).

Residues Lys-109–Arg-134 are disordered. A compositionally biased stretch (basic residues) spans Lys-115–Arg-134.

The protein belongs to the universal ribosomal protein uS9 family.

The chain is Small ribosomal subunit protein uS9 from Methanopyrus kandleri (strain AV19 / DSM 6324 / JCM 9639 / NBRC 100938).